The chain runs to 387 residues: Succinate--CoA ligase [ADP-forming] subunit beta (387 aa).

ATP is bound by residues lysine 46, 53–55, glutamate 99, alanine 102, and glutamate 107; that span reads GRG. 2 residues coordinate Mg(2+): asparagine 199 and aspartate 213. Substrate-binding positions include asparagine 264 and 321-323; that span reads GIV.

This sequence belongs to the succinate/malate CoA ligase beta subunit family. As to quaternary structure, heterotetramer of two alpha and two beta subunits. Mg(2+) serves as cofactor.

It carries out the reaction succinate + ATP + CoA = succinyl-CoA + ADP + phosphate. It catalyses the reaction GTP + succinate + CoA = succinyl-CoA + GDP + phosphate. The protein operates within carbohydrate metabolism; tricarboxylic acid cycle; succinate from succinyl-CoA (ligase route): step 1/1. Succinyl-CoA synthetase functions in the citric acid cycle (TCA), coupling the hydrolysis of succinyl-CoA to the synthesis of either ATP or GTP and thus represents the only step of substrate-level phosphorylation in the TCA. The beta subunit provides nucleotide specificity of the enzyme and binds the substrate succinate, while the binding sites for coenzyme A and phosphate are found in the alpha subunit. The polypeptide is Succinate--CoA ligase [ADP-forming] subunit beta (Campylobacter jejuni (strain RM1221)).